The chain runs to 491 residues: Chromosomal replication initiator protein DnaA (491 aa).

The domain I, interacts with DnaA modulators stretch occupies residues 1 to 69 (MTTWDKCLKK…TIQECHGNDL (69 aa)). The tract at residues 69 to 154 (LIIEYSNKKF…KEDEEYSFGL (86 aa)) is domain II. Positions 155–371 (PLKEKYVFDS…GALNRVLTTS (217 aa)) are domain III, AAA+ region. ATP-binding residues include Gly199, Gly201, Lys202, and Thr203. The segment at 372–491 (KFNHKDPTIE…YELLLNKISR (120 aa)) is domain IV, binds dsDNA.

Belongs to the DnaA family. Oligomerizes as a right-handed, spiral filament on DNA at oriC.

It localises to the cytoplasm. In terms of biological role, plays an essential role in the initiation and regulation of chromosomal replication. ATP-DnaA binds to the origin of replication (oriC) to initiate formation of the DNA replication initiation complex once per cell cycle. Binds the DnaA box (a 9 base pair repeat at the origin) and separates the double-stranded (ds)DNA. Forms a right-handed helical filament on oriC DNA; dsDNA binds to the exterior of the filament while single-stranded (ss)DNA is stabiized in the filament's interior. The ATP-DnaA-oriC complex binds and stabilizes one strand of the AT-rich DNA unwinding element (DUE), permitting loading of DNA polymerase. After initiation quickly degrades to an ADP-DnaA complex that is not apt for DNA replication. Binds acidic phospholipids. In Francisella tularensis subsp. tularensis (strain WY96-3418), this protein is Chromosomal replication initiator protein DnaA.